The chain runs to 466 residues: Soluble pyridine nucleotide transhydrogenase (466 aa).

Glu36–Cys45 contributes to the FAD binding site.

This sequence belongs to the class-I pyridine nucleotide-disulfide oxidoreductase family. It depends on FAD as a cofactor.

The protein resides in the cytoplasm. The catalysed reaction is NAD(+) + NADPH = NADH + NADP(+). Conversion of NADPH, generated by peripheral catabolic pathways, to NADH, which can enter the respiratory chain for energy generation. This chain is Soluble pyridine nucleotide transhydrogenase, found in Escherichia coli O6:K15:H31 (strain 536 / UPEC).